The following is a 105-amino-acid chain: Nitrogen fixation nifHD region glnB-like protein 1 (105 aa).

It belongs to the P(II) protein family.

Could be involved in the regulation of nitrogen fixation. The chain is Nitrogen fixation nifHD region glnB-like protein 1 (glnBI) from Methanococcus maripaludis (Methanococcus deltae).